A 180-amino-acid chain; its full sequence is MARVVRPQKNHVDLDIYQSSYMVDYKPFGKYKYSRVTPQEQAKLDAQLQSKEFYQPKPNPNPKLEEGYPAFRRPYMTALDLGVPGFFPPQERVTTRKDDGRFTTTCHYAYPASLALYLAQQDPYWLHQRADFPCLMEPERQPAPEVGKGYLLLPGCLCDHHQRVKVPILNRWGPLMPFYQ.

Microtubule inner protein component of sperm flagellar doublet microtubules. In terms of tissue distribution, only detected after the mouse is 35 days old. Expression increases gradually from day 35 to 6 months, and remains stable after 54 days. Exclusively expressed in the epididymis and testis.

It localises to the nucleus. Its subcellular location is the cytoplasm. The protein resides in the cytoskeleton. It is found in the flagellum axoneme. Its function is as follows. Microtubule inner protein (MIP) part of the dynein-decorated doublet microtubules (DMTs) in flagella axoneme. This chain is Protein SPMIP9 (Spmip9), found in Mus musculus (Mouse).